A 1099-amino-acid polypeptide reads, in one-letter code: Adenylate cyclase type 7 (1099 aa).

The Cytoplasmic portion of the chain corresponds to 1 to 33 (MPAKGRYFLNEGDEGPDQAALYEKYRLTSLHGP). 6 consecutive transmembrane segments (helical) span residues 34–54 (LLLL…SIAF), 63–83 (QVVL…YVLV), 95–117 (ALAL…DSLE), 122–142 (AWEQ…LLPL), 147–167 (AIVA…AVTR), and 178–198 (LGLQ…TGAF). Over 199–595 (HKHQLQDASR…YRLVPIPRAR (397 aa)) the chain is Cytoplasmic. Aspartate 286, isoleucine 287, and aspartate 330 together coordinate Mg(2+). Residues 286–291 (DIVGFT), 328–330 (LGD), and arginine 374 contribute to the ATP site. Residues 456–476 (DPRSQQPPPPSHHLSKPKGDA) form a disordered region. The interval 479 to 484 (KMRASV) is mediates regulation of adenylate cyclase activity by C5 alpha-induced G- beta and gamma pathway. Positions 493 to 501 (WGAARPFAH) are mediates regulation of adenylate cyclase activity by sphingosine 1-phosphate-induced G alpha 13 pathway. Residues 504–543 (HRESVSSSETPISNGRRQKAIPLRRHRAPDRSASPKGRLE) form a disordered region. Positions 508–518 (VSSSETPISNG) are enriched in polar residues. The modulates adenylate cyclase activity by modulating the binding of G(s)alpha to the high-affinity G(s)alpha binding site in 7C1a/7C2 stretch occupies residues 508–585 (VSSSETPISN…IFLEKGFERE (78 aa)). Residues 519–531 (RRQKAIPLRRHRA) show a composition bias toward basic residues. 3 helical membrane passes run 596–616 (YDFA…LLVM), 621–641 (TLGV…SFCF), and 670–689 (LVLV…INMP). An N-linked (GlcNAc...) asparagine glycan is attached at asparagine 702. A run of 3 helical transmembrane segments spans residues 719–738 (LLPY…SVFL), 747–766 (MLLT…SPCW), and 813–833 (DLKI…ILLS). Over 834 to 1099 (RQIDYYCRLD…TAKFQGLGLN (266 aa)) the chain is Cytoplasmic. ATP-binding positions include lysine 950, 1029 to 1031 (DIW), 1036 to 1040 (NVASR), and lysine 1076.

The protein belongs to the adenylyl cyclase class-4/guanylyl cyclase family. Mg(2+) is required as a cofactor. Mn(2+) serves as cofactor. Post-translationally, phosphorylated by PRKCD. As to expression, most abundant in heart, spleen and lung.

It is found in the membrane. It catalyses the reaction ATP = 3',5'-cyclic AMP + diphosphate. Activated by the G protein alpha subunit. Activated by the G protein beta and gamma subunit complex. Activated by GNA13 and GNA12. Ethanol and phorbol 12,13-dibutanoate significantly potentiate adenylate cyclase activity generated in response to the activation of the prostanoid receptor by the agonist prostaglandin E1(1-) in a PKC-dependent manner. Inhibited by lithium. Its function is as follows. Catalyzes the formation of cAMP in response to activation of G protein-coupled receptors. Functions in signaling cascades activated namely by thrombin and sphingosine 1-phosphate and mediates regulation of cAMP synthesis through synergistic action of the stimulatory G alpha protein with GNA13. Also, during inflammation, mediates zymosan-induced increase intracellular cAMP, leading to protein kinase A pathway activation in order to modulate innate immune responses through heterotrimeric G proteins G(12/13). Functions in signaling cascades activated namely by dopamine and C5 alpha chain and mediates regulation of cAMP synthesis through synergistic action of the stimulatory G protein with G beta:gamma complex. Functions, through cAMP response regulation, to keep inflammation under control during bacterial infection by sensing the presence of serum factors, such as the bioactive lysophospholipid (LPA) that regulate LPS-induced TNF-alpha production. However, it is also required for the optimal functions of B and T cells during adaptive immune responses by regulating cAMP synthesis in both B and T cells. This chain is Adenylate cyclase type 7, found in Mus musculus (Mouse).